A 284-amino-acid polypeptide reads, in one-letter code: S-formylglutathione hydrolase (284 aa).

Ala-2 carries the N-acetylalanine modification. Substrate is bound by residues Asn-63 and Lys-67. Residues Ser-152, Asp-229, and His-262 each act as charge relay system in the active site.

Belongs to the esterase D family. As to quaternary structure, homodimer.

It carries out the reaction S-formylglutathione + H2O = formate + glutathione + H(+). Its activity is regulated as follows. Activity toward p-nitrophenyl acetate inhibited by N-ethylmaleimide, 10-(fluoroethoxyphosphinyl)-N-(biotinamidopentyl)decanamide (FP-biotin), iodoacetamide, CuCl(2) and ZnSO(4), but not by phenylmethylsulfonyl fluoride, EDTA, Mg(2+), Mn(2+), Ca(2+) or paraoxon, an organo-phosphate inhibitor of serine hydrolases. Functionally, serine hydrolase which catalyzes the hydrolysis of S-formylglutathione to glutathione and formic acid. Also hydrolyzes S-acetylglutathione and a range of carboxyesters in vitro. Involved in the detoxification of formaldehyde. This is S-formylglutathione hydrolase (SFGH) from Arabidopsis thaliana (Mouse-ear cress).